We begin with the raw amino-acid sequence, 220 residues long: Ribonuclease P protein subunit p29 (220 aa).

Ser10 bears the Phosphoserine mark.

This sequence belongs to the eukaryotic/archaeal RNase P protein component 1 family. Component of nuclear RNase P and RNase MRP ribonucleoproteins. RNase P consists of a catalytic RNA moiety and 10 different protein chains; POP1, POP4, POP5, POP7, RPP14, RPP21, RPP25, RPP30, RPP38 and RPP40. Within the RNase P complex, POP1, POP7 and RPP25 form the 'finger' subcomplex, POP5, RPP14, RPP40 and homodimeric RPP30 form the 'palm' subcomplex, and RPP21, POP4 and RPP38 form the 'wrist' subcomplex. All subunits of the RNase P complex interact with the catalytic RNA. Several subunits of RNase P are also part of the RNase MRP complex. RNase MRP consists of a catalytic RNA moiety and about 8 protein subunits; POP1, POP7, RPP25, RPP30, RPP38, RPP40 and possibly also POP4 and POP5.

It localises to the nucleus. It is found in the nucleolus. Its function is as follows. Component of ribonuclease P, a ribonucleoprotein complex that generates mature tRNA molecules by cleaving their 5'-ends. This Pongo abelii (Sumatran orangutan) protein is Ribonuclease P protein subunit p29 (POP4).